Here is a 445-residue protein sequence, read N- to C-terminus: UDP-N-acetylmuramoylalanine--D-glutamate ligase (445 aa).

117-123 (GSNGKTT) is an ATP binding site.

Belongs to the MurCDEF family.

The protein localises to the cytoplasm. It carries out the reaction UDP-N-acetyl-alpha-D-muramoyl-L-alanine + D-glutamate + ATP = UDP-N-acetyl-alpha-D-muramoyl-L-alanyl-D-glutamate + ADP + phosphate + H(+). It functions in the pathway cell wall biogenesis; peptidoglycan biosynthesis. Cell wall formation. Catalyzes the addition of glutamate to the nucleotide precursor UDP-N-acetylmuramoyl-L-alanine (UMA). This chain is UDP-N-acetylmuramoylalanine--D-glutamate ligase, found in Neisseria meningitidis serogroup C (strain 053442).